The following is a 371-amino-acid chain: MPANLTEGSFHANQTVPMLDSSPVACTEIVTFTEALVAEEWGSFYSSFKTEQLITLWVLFVVTIVGNSVVLFSTCRRKRKSRMTFFVTQLAITDSFTGLINILTDIIWRFTGDFMAPDLVCRVVRYLQVVLLYASTYVLVSLSIDRYHAIVYPMKFLQGEKQAKVLIGIAWSLSFLFSIPTLIIFGKRTLSNGEVQCWALWPDDSYWTPYMTIVAFLVYFIPLAIISVIYGLVIRTIWMKSKTHETVISNCSDGKLCCSYNRGLISKAKIKAIKYSIVIILAFICCWSPYFLFDILDNFNVLPDTKERFYASVIIQNLPALNSAINPLIYCIFSSSICSPCKMQRSQDSRMTYRERSERHEMQILSKPEFI.

Residues 1–52 lie on the Extracellular side of the membrane; it reads MPANLTEGSFHANQTVPMLDSSPVACTEIVTFTEALVAEEWGSFYSSFKTEQ. N-linked (GlcNAc...) asparagine glycosylation is found at N4 and N13. The chain crosses the membrane as a helical span at residues 53-73; sequence LITLWVLFVVTIVGNSVVLFS. The Cytoplasmic portion of the chain corresponds to 74-82; that stretch reads TCRRKRKSR. Residues 83-103 traverse the membrane as a helical segment; it reads MTFFVTQLAITDSFTGLINIL. Topologically, residues 104-123 are extracellular; the sequence is TDIIWRFTGDFMAPDLVCRV. C121 and C197 are oxidised to a cystine. A helical membrane pass occupies residues 124–144; that stretch reads VRYLQVVLLYASTYVLVSLSI. At 145–164 the chain is on the cytoplasmic side; it reads DRYHAIVYPMKFLQGEKQAK. The chain crosses the membrane as a helical span at residues 165-185; that stretch reads VLIGIAWSLSFLFSIPTLIIF. Topologically, residues 186-212 are extracellular; the sequence is GKRTLSNGEVQCWALWPDDSYWTPYMT. A helical transmembrane segment spans residues 213 to 233; the sequence is IVAFLVYFIPLAIISVIYGLV. At 234 to 275 the chain is on the cytoplasmic side; the sequence is IRTIWMKSKTHETVISNCSDGKLCCSYNRGLISKAKIKAIKY. A helical membrane pass occupies residues 276-296; the sequence is SIVIILAFICCWSPYFLFDIL. Topologically, residues 297–312 are extracellular; it reads DNFNVLPDTKERFYAS. Residues 313-333 traverse the membrane as a helical segment; that stretch reads VIIQNLPALNSAINPLIYCIF. Topologically, residues 334-371 are cytoplasmic; the sequence is SSSICSPCKMQRSQDSRMTYRERSERHEMQILSKPEFI.

The protein belongs to the G-protein coupled receptor 1 family. Vasopressin/oxytocin receptor subfamily.

It localises to the cell membrane. In terms of biological role, G-protein coupled receptor for neuropeptide S (NPS). Promotes mobilization of intracellular Ca(2+) stores. Inhibits cell growth in response to NPS binding. Involved in pathogenesis of asthma and other IgE-mediated diseases. This is Neuropeptide S receptor (Npsr1) from Mus musculus (Mouse).